The chain runs to 375 residues: MENFPTEYFLNTSVRLLEYIRYRDSNYTREERIENLHYAYNKAAHHFAQPRQQQMLKVDPKRLQASLQTIVGMVVYSWAKVSKECMADLSIHYTYTLVLDDSSDDPHPAMLNYFDDLQAGREQAHPWWALVNEHFPNVLRHFGPFCSLNLIRSTMDFFEGCWIEQYNFGGFPGSDDYPQFLRRMNGLGHCVGASLWPKELFDERKNFLEITTAVAQMENWMVWVNDLMSFYKEFDDERDQISLVKNFVTCHEITLDEALEKLTQETLHSSKQMVAVFADKDPQVMDTIECFMHGYVTWHLCDARYRLHEIYEKVKDQDTEDAKKFCKFFEQAANVGAVAPSEWAYPQVAHLANVRAKGDVKEAQKPILSSIELVE.

The protein belongs to the trichodiene synthase family.

The catalysed reaction is (2E,6E)-farnesyl diphosphate = trichodiene + diphosphate. The protein operates within sesquiterpene biosynthesis; trichothecene biosynthesis. TS is a member of the terpene cyclase group of enzymes. It catalyzes the isomerization and cyclization of farnesyl pyro-phosphate to form trichodiene, the first cyclic intermediate in the biosynthetic pathway for trichothecenes. It serves to branch trichothecene biosynthesis from the isoprenoid pathway. In Fusarium asiaticum, this protein is Trichodiene synthase (TRI5).